Consider the following 484-residue polypeptide: AMP nucleosidase (484 aa).

It belongs to the AMP nucleosidase family.

It catalyses the reaction AMP + H2O = adenine + D-ribose 5-phosphate. Catalyzes the hydrolysis of the N-glycosidic bond of AMP to form adenine and ribose 5-phosphate. Involved in regulation of AMP concentrations. The protein is AMP nucleosidase of Escherichia coli O157:H7.